Here is a 310-residue protein sequence, read N- to C-terminus: Melanocyte-stimulating hormone receptor (310 aa).

Residues 1–37 (MPMQGAQRKLLGSLNSTPTATSNLGLAANRTGAPCLE) are Extracellular-facing. A glycan (N-linked (GlcNAc...) asparagine) is linked at N29. The chain crosses the membrane as a helical span at residues 38–63 (LPIPDGLFLSLGLVSLVENVLVVAAI). Residues 64-72 (AKNRNLHSS) are Cytoplasmic-facing. A helical membrane pass occupies residues 73–93 (MYCFICCLALSDLLVSGSNML). Residues 94 to 110 (EAGVLATRASVVQQLHN) lie on the Extracellular side of the membrane. A helical transmembrane segment spans residues 111-132 (TIDVLTCSSMLCSLCFLGAIAV). Residues 133-155 (DRYISIFYALRYHSIMTLPRAQR) lie on the Cytoplasmic side of the membrane. Residues 156–175 (AVAAIWVASVLSSTLFITYY) form a helical membrane-spanning segment. Residues 176 to 183 (DHAAVLLC) lie on the Extracellular side of the membrane. Residues 184 to 203 (LVVFFLAMLVLMAVLYVHML) form a helical membrane-spanning segment. Residues 204–232 (AWACQHAQGIIRLHKRQPPAHKGFGLRGA) lie on the Cytoplasmic side of the membrane. A helical membrane pass occupies residues 233–258 (ATLTILLGIFFLCWGPFFLRLTLVVF). Topologically, residues 259–271 (CPQHLTCNCIFKN) are extracellular. Residues 272 to 292 (FKVFLTLIICNTIIDPLIYAF) form a helical membrane-spanning segment. At 293–310 (RSQELRRTLKEVLGRGRW) the chain is on the cytoplasmic side.

This sequence belongs to the G-protein coupled receptor 1 family. In terms of assembly, interacts with MGRN1, but does not undergo MGRN1-mediated ubiquitination; this interaction competes with GNAS-binding and thus inhibits agonist-induced cAMP production. Interacts with OPN3; the interaction results in a decrease in MC1R-mediated cAMP signaling and ultimately a decrease in melanin production in melanocytes.

It localises to the cell membrane. Functionally, receptor for MSH (alpha, beta and gamma) and ACTH. The activity of this receptor is mediated by G proteins which activate adenylate cyclase. Mediates melanogenesis, the production of eumelanin (black/brown) and phaeomelanin (red/yellow), via regulation of cAMP signaling in melanocytes. In Leontopithecus chrysomelas (Golden-headed lion tamarin), this protein is Melanocyte-stimulating hormone receptor (MC1R).